The chain runs to 501 residues: Vitamin D 25-hydroxylase (501 aa).

The signal sequence occupies residues 1 to 26 (MWKLWRAEEGAAALGGALFLLLFALG). Ala-250 contributes to the substrate binding site. A heme-binding site is contributed by Cys-448.

This sequence belongs to the cytochrome P450 family. In terms of assembly, homodimer. Heme serves as cofactor.

It localises to the endoplasmic reticulum membrane. Its subcellular location is the microsome membrane. It carries out the reaction calciol + reduced [NADPH--hemoprotein reductase] + O2 = calcidiol + oxidized [NADPH--hemoprotein reductase] + H2O + H(+). It catalyses the reaction vitamin D2 + reduced [NADPH--hemoprotein reductase] + O2 = 25-hydroxyvitamin D2 + oxidized [NADPH--hemoprotein reductase] + H2O + H(+). The enzyme catalyses 1alpha-hydroxyvitamin D2 + reduced [NADPH--hemoprotein reductase] + O2 = 1alpha,25-dihydroxyvitamin D2 + oxidized [NADPH--hemoprotein reductase] + H2O + H(+). The catalysed reaction is alfacalcidol + reduced [NADPH--hemoprotein reductase] + O2 = calcitriol + oxidized [NADPH--hemoprotein reductase] + H2O + H(+). Its pathway is hormone biosynthesis; vitamin D biosynthesis. Its function is as follows. A cytochrome P450 monooxygenase involved in activation of vitamin D precursors. Catalyzes hydroxylation at C-25 of both forms of vitamin D, vitamin D(2) and D(3) (calciol). Can metabolize vitamin D analogs/prodrugs 1alpha-hydroxyvitamin D(2) (doxercalciferol) and 1alpha-hydroxyvitamin D(3) (alfacalcidol) forming 25-hydroxy derivatives. Mechanistically, uses molecular oxygen inserting one oxygen atom into a substrate, and reducing the second into a water molecule, with two electrons provided by NADPH via cytochrome P450 reductase (CPR; NADPH-ferrihemoprotein reductase). The protein is Vitamin D 25-hydroxylase (CYP2R1) of Homo sapiens (Human).